A 269-amino-acid chain; its full sequence is Small ribosomal subunit protein uS3 (269 aa).

Residues 38–106 (IREWLHKNLE…QIQLNILEVK (69 aa)) enclose the KH type-2 domain. Residues 215-269 (AQKAARQAAQGGRGGRGGNRRGRGDRPDRRGGRRRAEAAKQSAETPAPQTENAGA) form a disordered region. The segment covering 236 to 252 (GRGDRPDRRGGRRRAEA) has biased composition (basic and acidic residues). Polar residues predominate over residues 256–269 (SAETPAPQTENAGA).

It belongs to the universal ribosomal protein uS3 family. Part of the 30S ribosomal subunit. Forms a tight complex with proteins S10 and S14.

Functionally, binds the lower part of the 30S subunit head. Binds mRNA in the 70S ribosome, positioning it for translation. The sequence is that of Small ribosomal subunit protein uS3 from Cutibacterium acnes (strain DSM 16379 / KPA171202) (Propionibacterium acnes).